The sequence spans 284 residues: 2-dehydro-3-deoxyphosphooctonate aldolase (284 aa).

Belongs to the KdsA family.

It is found in the cytoplasm. It catalyses the reaction D-arabinose 5-phosphate + phosphoenolpyruvate + H2O = 3-deoxy-alpha-D-manno-2-octulosonate-8-phosphate + phosphate. It functions in the pathway carbohydrate biosynthesis; 3-deoxy-D-manno-octulosonate biosynthesis; 3-deoxy-D-manno-octulosonate from D-ribulose 5-phosphate: step 2/3. The protein operates within bacterial outer membrane biogenesis; lipopolysaccharide biosynthesis. In Paraburkholderia phymatum (strain DSM 17167 / CIP 108236 / LMG 21445 / STM815) (Burkholderia phymatum), this protein is 2-dehydro-3-deoxyphosphooctonate aldolase.